Reading from the N-terminus, the 1180-residue chain is Chitin synthase 6 (1180 aa).

2 helical membrane-spanning segments follow: residues 108 to 128 (FTIC…IIAF) and 374 to 394 (LLLA…IAAL). The N-linked (GlcNAc...) asparagine glycan is linked to Asn-737. 3 helical membrane passes run 762–782 (FIVF…VYLV), 795–815 (IPYI…ILFL), and 822–842 (YIGW…FLPI). One can recognise a DEK-C domain in the interval 1118-1175 (DPTDEEIKSAVQTYLANQPSLMNVTKRSVREALVAAFPNAELSYKKSMINKAIDDTLS).

The protein belongs to the chitin synthase family. Class V subfamily.

The protein localises to the cell membrane. It localises to the cytoplasmic vesicle membrane. It catalyses the reaction [(1-&gt;4)-N-acetyl-beta-D-glucosaminyl](n) + UDP-N-acetyl-alpha-D-glucosamine = [(1-&gt;4)-N-acetyl-beta-D-glucosaminyl](n+1) + UDP + H(+). Functionally, polymerizes chitin, a structural polymer of the cell wall and septum, by transferring the sugar moiety of UDP-GlcNAc to the non-reducing end of the growing chitin polymer. Plays a crucial role during infection and allows the fungus to overcome the resistance of the plant that checks growth of the pathogen and eventually eliminates it. This Mycosarcoma maydis (Corn smut fungus) protein is Chitin synthase 6.